The primary structure comprises 205 residues: ATP-dependent Clp protease proteolytic subunit (205 aa).

The active-site Nucleophile is the serine 107. Histidine 132 is an active-site residue.

It belongs to the peptidase S14 family. In terms of assembly, fourteen ClpP subunits assemble into 2 heptameric rings which stack back to back to give a disk-like structure with a central cavity, resembling the structure of eukaryotic proteasomes.

It is found in the cytoplasm. It catalyses the reaction Hydrolysis of proteins to small peptides in the presence of ATP and magnesium. alpha-casein is the usual test substrate. In the absence of ATP, only oligopeptides shorter than five residues are hydrolyzed (such as succinyl-Leu-Tyr-|-NHMec, and Leu-Tyr-Leu-|-Tyr-Trp, in which cleavage of the -Tyr-|-Leu- and -Tyr-|-Trp bonds also occurs).. Its function is as follows. Cleaves peptides in various proteins in a process that requires ATP hydrolysis. Has a chymotrypsin-like activity. Plays a major role in the degradation of misfolded proteins. The protein is ATP-dependent Clp protease proteolytic subunit of Pseudoalteromonas translucida (strain TAC 125).